The sequence spans 223 residues: MDSDSWSDRLASATRRYQLAFPSRSDTFLGFEEIDGEEEFREEFACPFCSDYFDIVSLCCHIDEDHPMEAKNGVCPVCAVRVGVDMVAHITLQHANIFKMHRKRKPRRGGSYSTLSILRREFPDGNFQSLFGGSSCIVSSSSSSNVAADPLLSSFISPIADGFFTTESCISAETGPVKKTTIQCLPEQNAKKTSLSAEDHKQKLKRSEFVRELLSSTILDDSL.

T114 bears the Phosphothreonine mark. The residue at position 116 (S116) is a Phosphoserine.

This sequence belongs to the Di19 family. In terms of processing, phosphorylated in vitro by CPK3 or CPK11. As to expression, expressed in seedlings, roots, leaves, stems, flowers and siliques.

The protein resides in the nucleus. The protein is Protein DEHYDRATION-INDUCED 19 homolog 3 (DI19-3) of Arabidopsis thaliana (Mouse-ear cress).